Here is a 248-residue protein sequence, read N- to C-terminus: Cell division protein ZapD (248 aa).

It belongs to the ZapD family. In terms of assembly, interacts with FtsZ.

It localises to the cytoplasm. Cell division factor that enhances FtsZ-ring assembly. Directly interacts with FtsZ and promotes bundling of FtsZ protofilaments, with a reduction in FtsZ GTPase activity. This is Cell division protein ZapD from Aliivibrio fischeri (strain ATCC 700601 / ES114) (Vibrio fischeri).